A 265-amino-acid chain; its full sequence is uncharacterized protein (265 aa).

The protein belongs to the MG067/MG068/MG395 family.

This is an uncharacterized protein from Mycoplasma pneumoniae (strain ATCC 29342 / M129 / Subtype 1) (Mycoplasmoides pneumoniae).